Reading from the N-terminus, the 434-residue chain is Methylenetetrahydrofolate--tRNA-(uracil-5-)-methyltransferase TrmFO (434 aa).

10-15 contributes to the FAD binding site; it reads GAGLAG.

This sequence belongs to the MnmG family. TrmFO subfamily. It depends on FAD as a cofactor.

The protein localises to the cytoplasm. The catalysed reaction is uridine(54) in tRNA + (6R)-5,10-methylene-5,6,7,8-tetrahydrofolate + NADH + H(+) = 5-methyluridine(54) in tRNA + (6S)-5,6,7,8-tetrahydrofolate + NAD(+). It carries out the reaction uridine(54) in tRNA + (6R)-5,10-methylene-5,6,7,8-tetrahydrofolate + NADPH + H(+) = 5-methyluridine(54) in tRNA + (6S)-5,6,7,8-tetrahydrofolate + NADP(+). Functionally, catalyzes the folate-dependent formation of 5-methyl-uridine at position 54 (M-5-U54) in all tRNAs. This chain is Methylenetetrahydrofolate--tRNA-(uracil-5-)-methyltransferase TrmFO, found in Bacillus cereus (strain G9842).